Reading from the N-terminus, the 365-residue chain is Saoe class I histocompatibility antigen, C alpha chain (365 aa).

An N-terminal signal peptide occupies residues 1–24; sequence MTIMAPRTLLLLLSGALSVTETWA. The interval 25 to 114 is alpha-1; it reads GSHSMRYFST…LLGYYNQSEA (90 aa). Over 25–308 the chain is Extracellular; that stretch reads GSHSMRYFST…EPPSQPTIPI (284 aa). N110 is a glycosylation site (N-linked (GlcNAc...) asparagine). The alpha-2 stretch occupies residues 115–206; that stretch reads GFHTIQWMYG…ENGKEMLQRA (92 aa). 2 cysteine pairs are disulfide-bonded: C125–C188 and C227–C283. Residues 207-298 are alpha-3; the sequence is EPPKTHVTHH…GLPEPFTLRW (92 aa). The Ig-like C1-type domain maps to 209-297; that stretch reads PKTHVTHHPV…EGLPEPFTLR (89 aa). The tract at residues 299–308 is connecting peptide; that stretch reads EPPSQPTIPI. The helical transmembrane segment at 309–332 threads the bilayer; it reads MGIVAILAILGAVVTGAVVAAVMW. Over 333–365 the chain is Cytoplasmic; the sequence is RKKSSDKKGGSYSQAARSDSAQGSDVSLTACKV. A disordered region spans residues 337–365; that stretch reads SDKKGGSYSQAARSDSAQGSDVSLTACKV. A compositionally biased stretch (polar residues) spans 346 to 359; sequence QAARSDSAQGSDVS. Residues S356 and S359 each carry the phosphoserine modification.

This sequence belongs to the MHC class I family. Heterodimer of an alpha chain and a beta chain (beta-2-microglobulin).

The protein resides in the membrane. Involved in the presentation of foreign antigens to the immune system. The sequence is that of Saoe class I histocompatibility antigen, C alpha chain from Saguinus oedipus (Cotton-top tamarin).